The chain runs to 404 residues: tRNA-specific 2-thiouridylase MnmA (404 aa).

ATP-binding positions include 42-49 (GLSGGVDS) and L68. C129 (nucleophile) is an active-site residue. C129 and C239 are oxidised to a cystine. G154 lines the ATP pocket. The tract at residues 189–191 (KDQ) is interaction with tRNA. The Cysteine persulfide intermediate role is filled by C239. Residues 344–345 (RY) form an interaction with tRNA region.

This sequence belongs to the MnmA/TRMU family.

It is found in the cytoplasm. The catalysed reaction is S-sulfanyl-L-cysteinyl-[protein] + uridine(34) in tRNA + AH2 + ATP = 2-thiouridine(34) in tRNA + L-cysteinyl-[protein] + A + AMP + diphosphate + H(+). Catalyzes the 2-thiolation of uridine at the wobble position (U34) of tRNA, leading to the formation of s(2)U34. This chain is tRNA-specific 2-thiouridylase MnmA, found in Prochlorococcus marinus (strain NATL1A).